A 95-amino-acid chain; its full sequence is MSYTIQAQTRTEIGKGSSRRLRHAGKVPAVIYGQGKEPVSIVFEHKDIINIQANEDFYTSVVTIVLDGKEVGVRAQAMQRHVFKPIIEHVDFVYA.

It belongs to the bacterial ribosomal protein bL25 family. In terms of assembly, part of the 50S ribosomal subunit; part of the 5S rRNA/L5/L18/L25 subcomplex. Contacts the 5S rRNA. Binds to the 5S rRNA independently of L5 and L18.

Functionally, this is one of the proteins that binds to the 5S RNA in the ribosome where it forms part of the central protuberance. This is Large ribosomal subunit protein bL25 from Shewanella putrefaciens (strain CN-32 / ATCC BAA-453).